The following is a 407-amino-acid chain: RNA-binding motif, single-stranded-interacting protein 2 (407 aa).

An N-acetylmethionine modification is found at methionine 1. Positions phenylalanine 14 to aspartate 51 are disordered. Residues serine 37–serine 47 are compositionally biased toward low complexity. RRM domains are found at residues threonine 56–glutamine 129 and threonine 135–glycine 220. Position 106 is a phosphoserine (serine 106). Phosphoserine is present on residues serine 280 and serine 285. A compositionally biased stretch (low complexity) spans proline 374–valine 392. The disordered stretch occupies residues proline 374 to histidine 398.

The protein resides in the nucleus. This Bos taurus (Bovine) protein is RNA-binding motif, single-stranded-interacting protein 2 (RBMS2).